The following is a 289-amino-acid chain: Ribosomal RNA small subunit methyltransferase I (289 aa).

The protein belongs to the methyltransferase superfamily. RsmI family.

Its subcellular location is the cytoplasm. It catalyses the reaction cytidine(1402) in 16S rRNA + S-adenosyl-L-methionine = 2'-O-methylcytidine(1402) in 16S rRNA + S-adenosyl-L-homocysteine + H(+). In terms of biological role, catalyzes the 2'-O-methylation of the ribose of cytidine 1402 (C1402) in 16S rRNA. This Helicobacter pylori (strain J99 / ATCC 700824) (Campylobacter pylori J99) protein is Ribosomal RNA small subunit methyltransferase I.